We begin with the raw amino-acid sequence, 347 residues long: Palmitoyltransferase ZDHHC11 (347 aa).

Residues M1 to A46 lie on the Cytoplasmic side of the membrane. The helical transmembrane segment at I47–L67 threads the bilayer. Topologically, residues P68–A75 are lumenal. A helical membrane pass occupies residues N76–I96. Residues D97 to Y170 lie on the Cytoplasmic side of the membrane. Residues Q128–A178 form the DHHC domain. C158 acts as the S-palmitoyl cysteine intermediate in catalysis. The chain crosses the membrane as a helical span at residues W171 to L191. At C192 to P234 the chain is on the lumenal side. A helical membrane pass occupies residues I235–G255. The Cytoplasmic segment spans residues H256 to D347. Basic and acidic residues predominate over residues E291 to D306. Positions E291–S332 are disordered. Residues F322–S331 show a composition bias toward polar residues.

The protein belongs to the DHHC palmitoyltransferase family. Interacts with IRF3 and STING1; in presence of DNA viruses recruits IRF3 to STING1 promoting IRF3 phosphorylation and activation.

It is found in the endosome membrane. The enzyme catalyses L-cysteinyl-[protein] + hexadecanoyl-CoA = S-hexadecanoyl-L-cysteinyl-[protein] + CoA. Endoplasmic reticulum-localized palmitoyltransferase that could catalyze the addition of palmitate onto various protein substrates and be involved in a variety of cellular processes. Has a palmitoyltransferase activity toward NCDN and regulates NCDN association with endosome membranes through this palmitoylation. May play a role in cell proliferation. In terms of biological role, also has a palmitoyltransferase activity-independent function in DNA virus-triggered and CGAS-mediated innate immune response. Functions as an adapter that recruits IRF3 to STING1 to promote the activation of that key transcriptional regulator of type I interferon (IFN)-dependent immune response. This Mus musculus (Mouse) protein is Palmitoyltransferase ZDHHC11.